The chain runs to 228 residues: MDMMMMSTRLIHLSRHFPQYGFRCHPSGLISSARMQYNINNGLAHMGKQMPNTSTHTTRIHPASFSSDLASRKYSLIYAFPLIRGLRALSRLKLLQTGITVVLLPTVYYLHLQGQASVLVLNRSIGIALFAGVMLYSISHFVRRVVGMMYLDSTQTILKVSHLSFWGHRRDIYVPVSDVVTLGDSGDSRGESILRLKRYSTSNTMYFSTRLGRVVDRHAFGKVFGSLS.

The Mitochondrial matrix segment spans residues 1–93 (MDMMMMSTRL…RGLRALSRLK (93 aa)). The helical transmembrane segment at 94 to 112 (LLQTGITVVLLPTVYYLHL) threads the bilayer. The Mitochondrial intermembrane segment spans residues 113–118 (QGQASV). The helical transmembrane segment at 119–141 (LVLNRSIGIALFAGVMLYSISHF) threads the bilayer. Topologically, residues 142 to 228 (VRRVVGMMYL…AFGKVFGSLS (87 aa)) are mitochondrial matrix.

It belongs to the TMEM186 family.

The protein localises to the mitochondrion inner membrane. Functionally, may be required for efficient assembly of the mitochondrial complex I. The sequence is that of Transmembrane protein 186 from Danio rerio (Zebrafish).